A 249-amino-acid polypeptide reads, in one-letter code: Enolase-phosphatase E1 (249 aa).

The protein belongs to the HAD-like hydrolase superfamily. MasA/MtnC family. As to quaternary structure, monomer. The cofactor is Mg(2+).

The catalysed reaction is 5-methylsulfanyl-2,3-dioxopentyl phosphate + H2O = 1,2-dihydroxy-5-(methylsulfanyl)pent-1-en-3-one + phosphate. Its pathway is amino-acid biosynthesis; L-methionine biosynthesis via salvage pathway; L-methionine from S-methyl-5-thio-alpha-D-ribose 1-phosphate: step 3/6. It functions in the pathway amino-acid biosynthesis; L-methionine biosynthesis via salvage pathway; L-methionine from S-methyl-5-thio-alpha-D-ribose 1-phosphate: step 4/6. Its function is as follows. Bifunctional enzyme that catalyzes the enolization of 2,3-diketo-5-methylthiopentyl-1-phosphate (DK-MTP-1-P) into the intermediate 2-hydroxy-3-keto-5-methylthiopentenyl-1-phosphate (HK-MTPenyl-1-P), which is then dephosphorylated to form the acireductone 1,2-dihydroxy-3-keto-5-methylthiopentene (DHK-MTPene). This chain is Enolase-phosphatase E1, found in Synechococcus sp. (strain RCC307).